The chain runs to 274 residues: D-aminopeptidase (274 aa).

The Zn(2+) site is built by D8, E10, H60, and H104. Catalysis depends on H115, which acts as the Nucleophile. Residue E133 coordinates Zn(2+).

This sequence belongs to the peptidase M55 family. Homodecamer. A 20 Angstroms wide channel runs through the complex, giving access to a central chamber holding the active sites. Zn(2+) is required as a cofactor.

Its function is as follows. Hydrolyzes N-terminal residues in D-amino acid containing peptides. Among the tested substrates, the highest activities are with D-Ala-D-Ala and D-Ala-Gly-Gly. The physiological role is not clear. The protein is D-aminopeptidase (dppA) of Bacillus subtilis (strain 168).